We begin with the raw amino-acid sequence, 117 residues long: Large ribosomal subunit protein bL20 (117 aa).

The protein belongs to the bacterial ribosomal protein bL20 family.

Its function is as follows. Binds directly to 23S ribosomal RNA and is necessary for the in vitro assembly process of the 50S ribosomal subunit. It is not involved in the protein synthesizing functions of that subunit. The chain is Large ribosomal subunit protein bL20 from Carboxydothermus hydrogenoformans (strain ATCC BAA-161 / DSM 6008 / Z-2901).